The following is a 633-amino-acid chain: DNA mismatch repair protein MutL (633 aa).

The protein belongs to the DNA mismatch repair MutL/HexB family.

Functionally, this protein is involved in the repair of mismatches in DNA. It is required for dam-dependent methyl-directed DNA mismatch repair. May act as a 'molecular matchmaker', a protein that promotes the formation of a stable complex between two or more DNA-binding proteins in an ATP-dependent manner without itself being part of a final effector complex. This Pseudomonas fluorescens (strain SBW25) protein is DNA mismatch repair protein MutL.